Reading from the N-terminus, the 975-residue chain is Glycine dehydrogenase (decarboxylating) (975 aa).

Lysine 723 is modified (N6-(pyridoxal phosphate)lysine).

This sequence belongs to the GcvP family. The glycine cleavage system is composed of four proteins: P, T, L and H. Pyridoxal 5'-phosphate serves as cofactor.

The catalysed reaction is N(6)-[(R)-lipoyl]-L-lysyl-[glycine-cleavage complex H protein] + glycine + H(+) = N(6)-[(R)-S(8)-aminomethyldihydrolipoyl]-L-lysyl-[glycine-cleavage complex H protein] + CO2. Functionally, the glycine cleavage system catalyzes the degradation of glycine. The P protein binds the alpha-amino group of glycine through its pyridoxal phosphate cofactor; CO(2) is released and the remaining methylamine moiety is then transferred to the lipoamide cofactor of the H protein. This Burkholderia lata (strain ATCC 17760 / DSM 23089 / LMG 22485 / NCIMB 9086 / R18194 / 383) protein is Glycine dehydrogenase (decarboxylating).